An 807-amino-acid polypeptide reads, in one-letter code: Glycerol-3-phosphate acyltransferase (807 aa).

Positions 305–310 (CHRSHM) match the HXXXXD motif motif.

Belongs to the GPAT/DAPAT family.

It is found in the cell inner membrane. It carries out the reaction sn-glycerol 3-phosphate + an acyl-CoA = a 1-acyl-sn-glycero-3-phosphate + CoA. The protein operates within phospholipid metabolism; CDP-diacylglycerol biosynthesis; CDP-diacylglycerol from sn-glycerol 3-phosphate: step 1/3. In Klebsiella pneumoniae (strain 342), this protein is Glycerol-3-phosphate acyltransferase.